A 470-amino-acid chain; its full sequence is Methylenetetrahydrofolate--tRNA-(uracil-5-)-methyltransferase TrmFO (470 aa).

10–15 (GAGLAG) provides a ligand contact to FAD.

This sequence belongs to the MnmG family. TrmFO subfamily. The cofactor is FAD.

The protein resides in the cytoplasm. The enzyme catalyses uridine(54) in tRNA + (6R)-5,10-methylene-5,6,7,8-tetrahydrofolate + NADH + H(+) = 5-methyluridine(54) in tRNA + (6S)-5,6,7,8-tetrahydrofolate + NAD(+). The catalysed reaction is uridine(54) in tRNA + (6R)-5,10-methylene-5,6,7,8-tetrahydrofolate + NADPH + H(+) = 5-methyluridine(54) in tRNA + (6S)-5,6,7,8-tetrahydrofolate + NADP(+). Catalyzes the folate-dependent formation of 5-methyl-uridine at position 54 (M-5-U54) in all tRNAs. The protein is Methylenetetrahydrofolate--tRNA-(uracil-5-)-methyltransferase TrmFO of Prochlorococcus marinus (strain MIT 9215).